The primary structure comprises 263 residues: Ribonuclease HII (263 aa).

Residues 74–262 enclose the RNase H type-2 domain; the sequence is EHVAGLDEVG…VQETAATRQT (189 aa). A divalent metal cation contacts are provided by Asp-80, Glu-81, and Asp-172.

This sequence belongs to the RNase HII family. It depends on Mn(2+) as a cofactor. Requires Mg(2+) as cofactor.

Its subcellular location is the cytoplasm. The catalysed reaction is Endonucleolytic cleavage to 5'-phosphomonoester.. In terms of biological role, endonuclease that specifically degrades the RNA of RNA-DNA hybrids. In Halalkalibacterium halodurans (strain ATCC BAA-125 / DSM 18197 / FERM 7344 / JCM 9153 / C-125) (Bacillus halodurans), this protein is Ribonuclease HII (rnhB).